Consider the following 616-residue polypeptide: Coagulation factor XII (616 aa).

An N-terminal signal peptide occupies residues 1-19 (MRALLLLGILLVSLESALL). Residues 42–90 (VTGEPCHFPFQYYRQLYYKCIQRGQRGPRPWCATTPNFEKDQRWAYCLE) enclose the Fibronectin type-II domain. 13 disulfide bridges follow: Cys-47–Cys-73, Cys-61–Cys-88, Cys-98–Cys-110, Cys-104–Cys-119, Cys-121–Cys-130, Cys-135–Cys-163, Cys-161–Cys-170, Cys-178–Cys-189, Cys-183–Cys-198, Cys-200–Cys-209, Cys-217–Cys-295, Cys-238–Cys-277, and Cys-266–Cys-290. Residues 94–131 (VKDHCNKGNPCQKGGTCVNMPNGPHCICPDHFTGKHCQ) form the EGF-like 1 domain. Thr-109 carries O-linked (Fuc) threonine glycosylation. One can recognise a Fibronectin type-I domain in the interval 133–173 (EKCFEPQFLQFFQENEIWHRFEPAGVSKCQCKGPKAQCKPV). Positions 174–210 (ASQVCSTNPCLNGGSCLQTEGHRLCRCPTGYAGRLCD) constitute an EGF-like 2 domain. Positions 216 to 295 (RCYSDRGLSY…SWQYCRLARC (80 aa)) constitute a Kringle domain. N-linked (GlcNAc...) asparagine glycosylation is found at Asn-249, Asn-271, and Asn-335. Positions 303–342 (PPILTPTQSPSEHQDSPLLSREPQPTTQTPSQNLTSAWCA) are disordered. Polar residues predominate over residues 325 to 338 (PQPTTQTPSQNLTS). Disulfide bonds link Cys-358/Cys-485, Cys-396/Cys-412, Cys-404/Cys-474, Cys-435/Cys-438, Cys-501/Cys-570, Cys-533/Cys-549, and Cys-560/Cys-591. Positions 372–615 (IVGGLVALPG…YLAWIQEHTT (244 aa)) constitute a Peptidase S1 domain. The active-site Charge relay system is His-411. A glycan (N-linked (GlcNAc...) asparagine) is linked at Asn-432. Residue Asp-460 is the Charge relay system of the active site. Catalysis depends on Ser-564, which acts as the Charge relay system.

It belongs to the peptidase S1 family. Interacts with HRG; the interaction, which is enhanced in the presence of zinc ions and inhibited by heparin-binding, inhibits factor XII autoactivation and contact-initiated coagulation. In terms of processing, O- and N-glycosylated.

Its subcellular location is the secreted. It carries out the reaction Selective cleavage of Arg-|-Ile bonds in factor VII to form factor VIIa and factor XI to form factor XIa.. Activity is promoted in the presence of negatively charged surfaces. Its function is as follows. Factor XII is a serum glycoprotein that participates in the initiation of blood coagulation, fibrinolysis, and the generation of bradykinin and angiotensin. Prekallikrein is cleaved by factor XII to form kallikrein, which then cleaves factor XII first to alpha-factor XIIa and then trypsin cleaves it to beta-factor XIIa. Alpha-factor XIIa activates factor XI to factor XIa. The chain is Coagulation factor XII (F12) from Sus scrofa (Pig).